Here is a 187-residue protein sequence, read N- to C-terminus: Small ribosomal subunit protein uS5 (187 aa).

The segment at 1–20 (MAERENRRDRRDDRSREETP) is disordered. The 64-residue stretch at 22–85 (FADRLVAINR…EQAKRQMIRV (64 aa)) folds into the S5 DRBM domain.

The protein belongs to the universal ribosomal protein uS5 family. As to quaternary structure, part of the 30S ribosomal subunit. Contacts proteins S4 and S8.

Its function is as follows. With S4 and S12 plays an important role in translational accuracy. In terms of biological role, located at the back of the 30S subunit body where it stabilizes the conformation of the head with respect to the body. This Cereibacter sphaeroides (strain ATCC 17029 / ATH 2.4.9) (Rhodobacter sphaeroides) protein is Small ribosomal subunit protein uS5.